The sequence spans 504 residues: Anaerobic nitric oxide reductase transcription regulator NorR (504 aa).

Residue aspartate 57 is modified to 4-aspartylphosphate. Positions 187-416 constitute a Sigma-54 factor interaction domain; sequence MIGLSPGMTQ…LEHAIHRAVV (230 aa). ATP contacts are provided by residues 215–222 and 278–287; these read GETGTGKE and ADNGTLFLDE. The H-T-H motif DNA-binding region spans 479–498; that stretch reads WAACARMLETDVANLHRLAK.

Its pathway is nitrogen metabolism; nitric oxide reduction. Its function is as follows. Required for the expression of anaerobic nitric oxide (NO) reductase, acts as a transcriptional activator for at least the norVW operon. Activation also requires sigma-54. The polypeptide is Anaerobic nitric oxide reductase transcription regulator NorR (Shigella sonnei (strain Ss046)).